The sequence spans 601 residues: MSSDSMRNIRNFSIIAHVDHGKSTLADRIIQLCGGLQAREMEAQVLDSNPIERERGITIKAQSVSLPYTAKDGQTYFLNFIDTPGHVDFSYEVSRSLAACEGALLVVDAAQGVEAQSVANCYTAVEQGLEVVPVLNKIDLPTADIERAKAEIEAVIGIDAEDAVAVSAKTGLNIDLVLEAIVHRIPPPKPRDTDKLQALIIDSWFDNYLGVVSLVRVMQGEIKPGSKIQVMSTGRTHLVDKVGVFTPKRKELVALGAGEVGWINASIKDVHGAPVGDTLTLAADPAPHALPGFQEMQPRVFAGLFPVDAEDYPDLREALDKLRLNDAALRFEPESSEAMGFGFRCGFLGMLHMEIVQERLEREYNLNLISTAPTVVYEVLKTDGTIIPMDNPSKLPPLNHVEEIREPIIRANILTPPDYVGNIITLCEEKRGSQIGINYLGSQVQISYELPMAEVVLDFFDKLKSVSRGYASLDYHFLRFDAGPFVRVDTLINGDKVDALSIIVHRSYADRRGRELCEKMKELIPRQMFDVAIQAAVGSQIISRSTVKAMRKNVLAKCYGGDVSRKKKLLEKQKEGKKRMKQVGRVEIPQEAFLAVLQMDK.

Positions 7 to 189 constitute a tr-type G domain; that stretch reads RNIRNFSIIA…AIVHRIPPPK (183 aa). GTP is bound by residues 19–24 and 136–139; these read DHGKST and NKID.

Belongs to the TRAFAC class translation factor GTPase superfamily. Classic translation factor GTPase family. LepA subfamily.

The protein resides in the cell inner membrane. It catalyses the reaction GTP + H2O = GDP + phosphate + H(+). Required for accurate and efficient protein synthesis under certain stress conditions. May act as a fidelity factor of the translation reaction, by catalyzing a one-codon backward translocation of tRNAs on improperly translocated ribosomes. Back-translocation proceeds from a post-translocation (POST) complex to a pre-translocation (PRE) complex, thus giving elongation factor G a second chance to translocate the tRNAs correctly. Binds to ribosomes in a GTP-dependent manner. The protein is Elongation factor 4 of Xanthomonas campestris pv. campestris (strain 8004).